The sequence spans 369 residues: Probable peptidoglycan glycosyltransferase FtsW (369 aa).

Helical transmembrane passes span 11–31 (LLSV…SSSV), 48–68 (NFIH…VPIY), 77–97 (LILC…SNHG), 134–151 (TSTI…KLLL), 154–174 (PDFG…FLIG), 177–197 (FLFL…LIYF), 265–285 (LGYL…FQGM), and 306–326 (ISLL…GILP).

The protein belongs to the SEDS family. FtsW subfamily.

Its subcellular location is the cell inner membrane. The catalysed reaction is [GlcNAc-(1-&gt;4)-Mur2Ac(oyl-L-Ala-gamma-D-Glu-L-Lys-D-Ala-D-Ala)](n)-di-trans,octa-cis-undecaprenyl diphosphate + beta-D-GlcNAc-(1-&gt;4)-Mur2Ac(oyl-L-Ala-gamma-D-Glu-L-Lys-D-Ala-D-Ala)-di-trans,octa-cis-undecaprenyl diphosphate = [GlcNAc-(1-&gt;4)-Mur2Ac(oyl-L-Ala-gamma-D-Glu-L-Lys-D-Ala-D-Ala)](n+1)-di-trans,octa-cis-undecaprenyl diphosphate + di-trans,octa-cis-undecaprenyl diphosphate + H(+). Its pathway is cell wall biogenesis; peptidoglycan biosynthesis. In terms of biological role, peptidoglycan polymerase that is essential for cell division. The protein is Probable peptidoglycan glycosyltransferase FtsW of Riesia pediculicola (strain USDA).